Reading from the N-terminus, the 626-residue chain is Membrane protein insertase YidC (626 aa).

The next 5 helical transmembrane spans lie at 8-28 (LILATGLSFVVILVWFLLFPP), 399-419 (MGLAIISLTLIVKAVLFPLAY), 469-489 (LPILLQIPIFFSLYKVIFVTL), 527-547 (SIMALIFIGILPLLLGISMWL), and 563-583 (IFAWLPWVFMFMLGSFASGLL).

This sequence belongs to the OXA1/ALB3/YidC family. Type 1 subfamily. As to quaternary structure, interacts with the Sec translocase complex via SecD. Specifically interacts with transmembrane segments of nascent integral membrane proteins during membrane integration.

Its subcellular location is the cell inner membrane. In terms of biological role, required for the insertion and/or proper folding and/or complex formation of integral membrane proteins into the membrane. Involved in integration of membrane proteins that insert both dependently and independently of the Sec translocase complex, as well as at least some lipoproteins. Aids folding of multispanning membrane proteins. The chain is Membrane protein insertase YidC from Jannaschia sp. (strain CCS1).